Here is a 493-residue protein sequence, read N- to C-terminus: Isoniazid-induced protein IniC (493 aa).

The chain is Isoniazid-induced protein IniC (iniC) from Mycobacterium tuberculosis (strain CDC 1551 / Oshkosh).